A 204-amino-acid polypeptide reads, in one-letter code: Redox-sensing transcriptional repressor Rex 2 (204 aa).

Positions 17–53 (MYRKVLEATKKPYISSDEIARFLEINPDLVRKDFSYL) form a DNA-binding region, H-T-H motif.

It belongs to the transcriptional regulatory Rex family. As to quaternary structure, homodimer.

The protein localises to the cytoplasm. Its function is as follows. Modulates transcription in response to changes in cellular NADH/NAD(+) redox state. This Thermotoga maritima (strain ATCC 43589 / DSM 3109 / JCM 10099 / NBRC 100826 / MSB8) protein is Redox-sensing transcriptional repressor Rex 2 (rex2).